Consider the following 288-residue polypeptide: Xyloglucan endotransglucosylase protein 8 (288 aa).

Positions Met-1–Ser-25 are cleaved as a signal peptide. The region spanning Ser-26 to Tyr-215 is the GH16 domain. Glu-102 functions as the Nucleophile in the catalytic mechanism. Glu-106 (proton donor) is an active-site residue. Glu-106 contacts xyloglucan. A glycan (N-linked (GlcNAc...) asparagine) is linked at Asn-110. Xyloglucan is bound by residues His-119 to Asn-121, Glu-129 to Glu-131, Glu-194 to Trp-195, and Gly-199. Cystine bridges form between Cys-224–Cys-233 and Cys-268–Cys-282. Arg-273 is a binding site for xyloglucan.

The protein belongs to the glycosyl hydrolase 16 family. XTH group 2 subfamily. Post-translationally, contains at least one intrachain disulfide bond essential for its enzymatic activity. Highly expressed in mature fruits. Very low expression in leaves, flowers, calyces and stems.

The protein localises to the secreted. It is found in the cell wall. It localises to the extracellular space. The protein resides in the apoplast. The catalysed reaction is breaks a beta-(1-&gt;4) bond in the backbone of a xyloglucan and transfers the xyloglucanyl segment on to O-4 of the non-reducing terminal glucose residue of an acceptor, which can be a xyloglucan or an oligosaccharide of xyloglucan.. Functionally, catalyzes xyloglucan endotransglycosylation (XET). Cleaves and religates xyloglucan polymers. Does not catalyze xyloglucan endohydrolysis (XEH). Overexpression in Arabidopsis transgenic plants causes accelerated dark-induced leaf senescence and higher lipid peroxidation of the leaf cells. Overexpression in transgenic tomato plants promotes fruit ripening and softening. Probably involved in cell wall restructuring during postharvest fruit softening. The chain is Xyloglucan endotransglucosylase protein 8 from Diospyros kaki (Kaki persimmon).